Consider the following 407-residue polypeptide: MTVRGDVLAPDPASPTTAAASPSVSVIPEGSPTAMEQPVFLMTTAAQAISGFFVWTALLITCHQIYMHLRCYSCPNEQRYIVRILFIVPIYAFDSWLSLLFFTNDQYYVYFGTVRDCYEALVIYNFLSLCYEYLGGESSIMSEIRGKPIESSCMYGTCCLWGKTYSIGFLRFCKQATLQFCVVKPLMAVSTVVLQAFGKYRDGDFDVTSGYLYVTIIYNISVSLALYALFLFYFATRELLSPYSPVLKFFMVKSVIFLSFWQGMLLAILEKCGAIPKIHSARVSVGEGTVAAGYQDFIICVEMFFAALALRHAFTYKVYADKRLDAQGRCAPMKSISSSLKETMNPHDIVQDAIHNFSPAYQQYTQQSTLEPGPTWRGGAHGLSRSHSLSGARDNEKTLLLSSDDEF.

A disordered region spans residues 1 to 25 (MTVRGDVLAPDPASPTTAAASPSVS). The segment covering 9 to 25 (APDPASPTTAAASPSVS) has biased composition (low complexity). 7 helical membrane-spanning segments follow: residues 40–60 (FLMT…ALLI), 84–104 (ILFI…FFTN), 121–141 (LVIY…SSIM), 178–198 (LQFC…QAFG), 214–234 (VTII…LFYF), 249–269 (FFMV…LAIL), and 290–310 (VAAG…ALAL). The tract at residues 369–395 (TLEPGPTWRGGAHGLSRSHSLSGARDN) is disordered. Phosphoserine occurs at positions 388, 402, and 403.

Belongs to the TMEM184 family.

Its subcellular location is the membrane. May activate the MAP kinase signaling pathway. In Homo sapiens (Human), this protein is Transmembrane protein 184B (TMEM184B).